Consider the following 428-residue polypeptide: 3-phosphoshikimate 1-carboxyvinyltransferase (428 aa).

3 residues coordinate 3-phosphoshikimate: Lys23, Ser24, and Arg28. A phosphoenolpyruvate-binding site is contributed by Lys23. Residues Gly97 and Arg125 each coordinate phosphoenolpyruvate. 3-phosphoshikimate is bound by residues Ser170, Ser171, Gln172, Ser198, Asp314, Asn337, and Lys341. Residue Gln172 participates in phosphoenolpyruvate binding. Asp314 (proton acceptor) is an active-site residue. Residues Arg345, Arg387, and Lys412 each coordinate phosphoenolpyruvate.

This sequence belongs to the EPSP synthase family. As to quaternary structure, monomer.

Its subcellular location is the cytoplasm. It carries out the reaction 3-phosphoshikimate + phosphoenolpyruvate = 5-O-(1-carboxyvinyl)-3-phosphoshikimate + phosphate. It functions in the pathway metabolic intermediate biosynthesis; chorismate biosynthesis; chorismate from D-erythrose 4-phosphate and phosphoenolpyruvate: step 6/7. Functionally, catalyzes the transfer of the enolpyruvyl moiety of phosphoenolpyruvate (PEP) to the 5-hydroxyl of shikimate-3-phosphate (S3P) to produce enolpyruvyl shikimate-3-phosphate and inorganic phosphate. The polypeptide is 3-phosphoshikimate 1-carboxyvinyltransferase (Erwinia tasmaniensis (strain DSM 17950 / CFBP 7177 / CIP 109463 / NCPPB 4357 / Et1/99)).